A 122-amino-acid chain; its full sequence is Ribosome-binding factor A (122 aa).

It belongs to the RbfA family. As to quaternary structure, monomer. Binds 30S ribosomal subunits, but not 50S ribosomal subunits or 70S ribosomes.

The protein resides in the cytoplasm. In terms of biological role, one of several proteins that assist in the late maturation steps of the functional core of the 30S ribosomal subunit. Associates with free 30S ribosomal subunits (but not with 30S subunits that are part of 70S ribosomes or polysomes). Required for efficient processing of 16S rRNA. May interact with the 5'-terminal helix region of 16S rRNA. The protein is Ribosome-binding factor A of Halothermothrix orenii (strain H 168 / OCM 544 / DSM 9562).